The primary structure comprises 166 residues: Transmembrane protein 190 (166 aa).

The signal sequence occupies residues 1-21; the sequence is MVGSGISALGLLLLMQGSVDA. Residues 22-81 lie on the Extracellular side of the membrane; the sequence is NGIQGFFYPWSCEGDVWDRESCGGQAAIENPNLCLRLRCCYRDGVCYHQRPDENMRRKHM. The region spanning 31–71 is the P-type domain; it reads WSCEGDVWDRESCGGQAAIENPNLCLRLRCCYRDGVCYHQR. Disulfide bonds link Cys33–Cys61, Cys43–Cys60, and Cys55–Cys67. The chain crosses the membrane as a helical span at residues 82-102; it reads WALGWTCGSLLFLITSICLFW. Residues 103 to 166 lie on the Cytoplasmic side of the membrane; sequence WARRQDMLHL…VSGEDTGGEE (64 aa). The interval 130–166 is disordered; sequence LSKDRRSANKSTTVLQSPGGEVETAAAVSGEDTGGEE.

In terms of tissue distribution, detected in testis and in a mixture of spermatogenic cells at various stages (testicular germ cells). Not detected in heart, brain, spleen, lung, liver, skeletal muscle and kidney.

It is found in the membrane. The chain is Transmembrane protein 190 (Tmem190) from Mus musculus (Mouse).